The chain runs to 284 residues: Deoxyribonuclease-1 (284 aa).

An N-terminal signal peptide occupies residues 1–22; it reads MRYTGLMGILLTLVNLLQLAAT. Asn40 is a glycosylation site (N-linked (GlcNAc...) asparagine). Glu100 is an active-site residue. Cys123 and Cys126 are disulfide-bonded. The N-linked (GlcNAc...) asparagine glycan is linked to Asn128. His156 is an active-site residue. A disulfide bridge connects residues Cys195 and Cys231.

Belongs to the DNase I family. Ca(2+) serves as cofactor. The cofactor is Mg(2+).

It is found in the secreted. It localises to the zymogen granule. Its subcellular location is the nucleus envelope. It carries out the reaction Endonucleolytic cleavage to 5'-phosphodinucleotide and 5'-phosphooligonucleotide end-products.. Serum endocuclease secreted into body fluids by a wide variety of exocrine and endocrine organs. Expressed by non-hematopoietic tissues and preferentially cleaves protein-free DNA. Among other functions, seems to be involved in cell death by apoptosis. Binds specifically to G-actin and blocks actin polymerization. Together with DNASE1L3, plays a key role in degrading neutrophil extracellular traps (NETs). NETs are mainly composed of DNA fibers and are released by neutrophils to bind pathogens during inflammation. Degradation of intravascular NETs by DNASE1 and DNASE1L3 is required to prevent formation of clots that obstruct blood vessels and cause organ damage following inflammation. This is Deoxyribonuclease-1 (Dnase1) from Rattus norvegicus (Rat).